The primary structure comprises 294 residues: Large ribosomal subunit protein uL2c (294 aa).

The disordered stretch occupies residues 224-249 (VMNPVDHPHGGGGEGKSPIGRSRPVT).

This sequence belongs to the universal ribosomal protein uL2 family. In terms of assembly, part of the 50S ribosomal subunit.

The protein localises to the plastid. It localises to the chloroplast. The sequence is that of Large ribosomal subunit protein uL2c (rpl2) from Porphyra purpurea (Red seaweed).